Reading from the N-terminus, the 433-residue chain is Enolase (433 aa).

Q166 contributes to the (2R)-2-phosphoglycerate binding site. The Proton donor role is filled by E208. Residues D245, E290, and D317 each contribute to the Mg(2+) site. (2R)-2-phosphoglycerate-binding residues include K342, R371, S372, and K393. Residue K342 is the Proton acceptor of the active site.

This sequence belongs to the enolase family. Requires Mg(2+) as cofactor.

The protein localises to the cytoplasm. It localises to the secreted. Its subcellular location is the cell surface. It carries out the reaction (2R)-2-phosphoglycerate = phosphoenolpyruvate + H2O. It participates in carbohydrate degradation; glycolysis; pyruvate from D-glyceraldehyde 3-phosphate: step 4/5. In terms of biological role, catalyzes the reversible conversion of 2-phosphoglycerate (2-PG) into phosphoenolpyruvate (PEP). It is essential for the degradation of carbohydrates via glycolysis. This Clostridium novyi (strain NT) protein is Enolase.